Consider the following 412-residue polypeptide: MAKQTLGSLLSSGFDLKGKRVLVRADFNVPLDPQGNITDDTRIRASLPTIQALAQAGAKVILTSHLGRPIQKDKATGAIQIAREGNSLAPVAVRLAQLLGQPVAFAPDCIGPEAEAVVSSLENGQVALLENVRFHPEEEANDPEFARKLASLADLFVNDAFGSAHRAHASTAGVTAYLQPAVAGYLVEKELQFLSGAIENPQRPLAAIIGGSKVSTKIGVIERLLEKVDKLLLGGGMIFTFYQAQGIPTGKSLVETDKLDLARSLMEKAKARGVELLLPVDVVVADRFDKDANAQTVSIHAIPEDWMGLDIGPESVKAFQAALQGCKTVVWNGPMGVFEFDRFAAGTEAIARTLADLTQAGAITIIGGGDSVAAVEKVGLADKMTHISTGGGASLELLEGKELPGIAALSEA.

Residues 26-28, arginine 42, 65-68, arginine 133, and arginine 166 each bind substrate; these read DFN and HLGR. ATP contacts are provided by residues lysine 217, glycine 308, glutamate 339, and 368–371; that span reads GGDS.

It belongs to the phosphoglycerate kinase family. As to quaternary structure, monomer.

It is found in the cytoplasm. The catalysed reaction is (2R)-3-phosphoglycerate + ATP = (2R)-3-phospho-glyceroyl phosphate + ADP. It participates in carbohydrate degradation; glycolysis; pyruvate from D-glyceraldehyde 3-phosphate: step 2/5. In Synechococcus sp. (strain JA-3-3Ab) (Cyanobacteria bacterium Yellowstone A-Prime), this protein is Phosphoglycerate kinase.